The primary structure comprises 125 residues: Ribonuclease P protein component (125 aa).

Belongs to the RnpA family. Consists of a catalytic RNA component (M1 or rnpB) and a protein subunit.

It carries out the reaction Endonucleolytic cleavage of RNA, removing 5'-extranucleotides from tRNA precursor.. In terms of biological role, RNaseP catalyzes the removal of the 5'-leader sequence from pre-tRNA to produce the mature 5'-terminus. It can also cleave other RNA substrates such as 4.5S RNA. The protein component plays an auxiliary but essential role in vivo by binding to the 5'-leader sequence and broadening the substrate specificity of the ribozyme. This Oleidesulfovibrio alaskensis (strain ATCC BAA-1058 / DSM 17464 / G20) (Desulfovibrio alaskensis) protein is Ribonuclease P protein component.